We begin with the raw amino-acid sequence, 118 residues long: UPF0295 protein BCG9842_B4782 (118 aa).

Helical transmembrane passes span 12 to 32 (IRTF…LGVF) and 43 to 63 (FMMV…WIGM).

It belongs to the UPF0295 family.

Its subcellular location is the cell membrane. This is UPF0295 protein BCG9842_B4782 from Bacillus cereus (strain G9842).